The primary structure comprises 34 residues: Photosystem II reaction center protein M (34 aa).

The helical transmembrane segment at 7-27 threads the bilayer; sequence GFVASLLFVLVPTVFLIILFI.

It belongs to the PsbM family. As to quaternary structure, PSII is composed of 1 copy each of membrane proteins PsbA, PsbB, PsbC, PsbD, PsbE, PsbF, PsbH, PsbI, PsbJ, PsbK, PsbL, PsbM, PsbT, PsbX, PsbY, PsbZ, Psb30/Ycf12, peripheral proteins PsbO, CyanoQ (PsbQ), PsbU, PsbV and a large number of cofactors. It forms dimeric complexes.

Its subcellular location is the cellular thylakoid membrane. Functionally, one of the components of the core complex of photosystem II (PSII). PSII is a light-driven water:plastoquinone oxidoreductase that uses light energy to abstract electrons from H(2)O, generating O(2) and a proton gradient subsequently used for ATP formation. It consists of a core antenna complex that captures photons, and an electron transfer chain that converts photonic excitation into a charge separation. This subunit is found at the monomer-monomer interface. This chain is Photosystem II reaction center protein M, found in Synechococcus sp. (strain WH7803).